The sequence spans 520 residues: Apolipoprotein N-acyltransferase (520 aa).

A run of 7 helical transmembrane segments spans residues 12–32 (IFTY…FSPF), 33–53 (DYWG…KTAE), 58–78 (LWSA…WVHV), 93–113 (VLVL…AYLI), 122–142 (AMFP…FTGF), 168–188 (VTFF…VLLI), and 193–213 (WNVV…SAYS). The CN hydrolase domain maps to 232–479 (AQGNIEQNLK…ETTLTHKVAA (248 aa)). Glu272 acts as the Proton acceptor in catalysis. Lys338 is a catalytic residue. Cys390 serves as the catalytic Nucleophile. The helical transmembrane segment at 484 to 504 (TPYAVFGNTAIYGLSLLLLLM) threads the bilayer.

Belongs to the CN hydrolase family. Apolipoprotein N-acyltransferase subfamily.

Its subcellular location is the cell inner membrane. It carries out the reaction N-terminal S-1,2-diacyl-sn-glyceryl-L-cysteinyl-[lipoprotein] + a glycerophospholipid = N-acyl-S-1,2-diacyl-sn-glyceryl-L-cysteinyl-[lipoprotein] + a 2-acyl-sn-glycero-3-phospholipid + H(+). Its pathway is protein modification; lipoprotein biosynthesis (N-acyl transfer). Functionally, catalyzes the phospholipid dependent N-acylation of the N-terminal cysteine of apolipoprotein, the last step in lipoprotein maturation. The chain is Apolipoprotein N-acyltransferase from Pasteurella multocida (strain Pm70).